Here is a 104-residue protein sequence, read N- to C-terminus: Ribonucleotide reductase inhibitor protein SML1 (104 aa).

Residue M1 is modified to N-acetylmethionine. The disordered stretch occupies residues 43 to 62 (PMLSTQNSMGSSASASASSL). 3 positions are modified to phosphoserine; by DUN1: S56, S58, and S60.

Homodimer; disulfide-linked. Interacts with RNR1. In terms of processing, phosphorylated by DUN1, a downstream effector of the Mec1/Rad53 checkpoint pathway, in response to DNA damage. This promotes ubiquitination of SML1 and targets it for degradation by the 26S proteasome.

The protein localises to the nucleus. Its subcellular location is the cytoplasm. Functionally, strong inhibitor of ribonucleotide reductase (RNR1) and is involved in regulating dNTP production. The protein is Ribonucleotide reductase inhibitor protein SML1 (SML1) of Saccharomyces cerevisiae (strain ATCC 204508 / S288c) (Baker's yeast).